The primary structure comprises 473 residues: MTQSGGTNTGALWGGRFASGPAAAMAALSKSTHFDWALAPYDIRASKAHARVLHKAGLLSDADLDTMLAGLDGLAADVASGAFVPAETDEDVHGALERGLIDRVGAEVGGRLRAGRSRNDQVATLFRMWLRDGVRRVAAGVLDVVDALVEQAAAHPDAVMPGKTHLQAAQPVLLAHHLLAHAHPLLRDIERLRDFDKRAAVSPYGSGALAGSSLGLDPEAIAADLDFDAAAANSIDATSARDFAAEAAFVLAMIAVDLSRMAEEVIIWSTPEFGYVTLADAWSTGSSIMPQKKNPDVSELTRGKAGRLIGNLTGLLATLKAQPLAYNRDLQEDKEPVFDSVAQLELLLPAIAGLVGTLTFHTDRMAELAPAGFTLATDIAEWLVREGVPFRVAHEAAGACVRAAEARGVGLDALTDEEFAAIDPALTPRVREVLTVQGSIASRNAKGGTAGTRVAEQLAEVRAAAQQARAWIA.

The protein belongs to the lyase 1 family. Argininosuccinate lyase subfamily.

It is found in the cytoplasm. It catalyses the reaction 2-(N(omega)-L-arginino)succinate = fumarate + L-arginine. It participates in amino-acid biosynthesis; L-arginine biosynthesis; L-arginine from L-ornithine and carbamoyl phosphate: step 3/3. The chain is Argininosuccinate lyase from Nocardia farcinica (strain IFM 10152).